A 231-amino-acid chain; its full sequence is ATP-dependent dethiobiotin synthetase BioD (231 aa).

Residue 12-17 participates in ATP binding; it reads EVGKTV. T16 contacts Mg(2+). K37 is an active-site residue. Residue S41 participates in substrate binding. ATP contacts are provided by residues D51, 112-115, and 202-204; these read EGAG and PKL. 2 residues coordinate Mg(2+): D51 and E112.

Belongs to the dethiobiotin synthetase family. In terms of assembly, homodimer. It depends on Mg(2+) as a cofactor.

Its subcellular location is the cytoplasm. It catalyses the reaction (7R,8S)-7,8-diammoniononanoate + CO2 + ATP = (4R,5S)-dethiobiotin + ADP + phosphate + 3 H(+). It participates in cofactor biosynthesis; biotin biosynthesis; biotin from 7,8-diaminononanoate: step 1/2. Functionally, catalyzes a mechanistically unusual reaction, the ATP-dependent insertion of CO2 between the N7 and N8 nitrogen atoms of 7,8-diaminopelargonic acid (DAPA, also called 7,8-diammoniononanoate) to form a ureido ring. The sequence is that of ATP-dependent dethiobiotin synthetase BioD from Bacillus subtilis (strain 168).